A 652-amino-acid chain; its full sequence is p-hydroxybenzoic acid efflux pump subunit AaeB (652 aa).

Helical transmembrane passes span 8–28 (FPIKLTFAIVLSLLIGFHFNL), 34–54 (AVMTACIVAGGTAFAAGGDPF), 64–84 (LRIIGTFLGCIAALTIMIATI), 88–108 (ALMMLLCCMWAGLCVWLSSLI), 118–138 (LAGYTALIIVVSVDANGSVLL), 149–169 (EIIIGIVCAILADMLFSPRSV), 367–387 (LFWLWTGWASGSGAMVMLAVI), 404–424 (FLYGMIVAIPLGSLYYMVIMP), 429–449 (SMLLLCISLGVMAFIGGILIQ), 453–473 (IGTLGGLVGTINIITLDNPMT), and 480–500 (LDNALGQAIGCFLALLVILLI).

It belongs to the aromatic acid exporter ArAE (TC 2.A.85) family.

It localises to the cell inner membrane. Its function is as follows. Forms an efflux pump with AaeA. Could function as a metabolic relief valve, allowing to eliminate certain compounds when they accumulate to high levels in the cell. This chain is p-hydroxybenzoic acid efflux pump subunit AaeB, found in Erwinia billingiae (strain Eb661).